We begin with the raw amino-acid sequence, 258 residues long: Steroid 5-alpha-reductase DET2 (258 aa).

6 helical membrane-spanning segments follow: residues 8 to 28 (FHYC…SLYF), 49 to 69 (LAWF…FPSG), 77 to 97 (SFLL…LYPL), 109 to 129 (FPVS…YLQA), 144 to 164 (LFWW…WVNV), and 201 to 221 (IMEW…GFFL).

The protein belongs to the steroid 5-alpha reductase family. Accumulates in fibers (seed trichomes) during both their initiation and elongation phases. Also present in roots, hypocotyls, leaves, flowers and ovules, and barely in cotyledons.

The protein localises to the membrane. The enzyme catalyses a 3-oxo-5alpha-steroid + NADP(+) = a 3-oxo-Delta(4)-steroid + NADPH + H(+). Its pathway is plant hormone biosynthesis; brassinosteroid biosynthesis. In terms of biological role, involved in a reduction step in the biosynthesis of the plant steroid, brassinolide (BL). Promotes cotton fibers (seed trichomes) initiation and elongation. In Gossypium hirsutum (Upland cotton), this protein is Steroid 5-alpha-reductase DET2.